Consider the following 428-residue polypeptide: MSYIGLQQDSGEYKIQKIHAREILDSRGNPTVEVDVFTPKGFGRAGVPSGASTGTNEALELRDADPNRYGGKGVLTAVKNVNTIIQKELLGLDVRNQREIDELMIELDETDNKSNLGANAILGVSMAVARAAADSLNVPLYRYLGGSNAFTLPVPTMNVLNGGKHAGNDLAIQEFMIQPKGAETFYEALQIGAEIYHVLGKILEKKYGRSSTNVGYEGGYAPKMSESTEALDALAQAIEEAGYTDTEVTIGLDAAASEFYEDEAYAIDGKKLSAPELMDYYVELVNSYPILSIEDPFYEEAFEDFEALTNELWDTIIVGDDLFVTNIERLSKGVDMGAANALLLKVNQIGTISEAFDAANMASRNGYTVIVSHRSAETEDTTIADISVAIGAEMIKTGAPARGERTAKYNQLLRIEEDLGEVAHYVQL.

Glutamine 173 serves as a coordination point for (2R)-2-phosphoglycerate. Catalysis depends on glutamate 217, which acts as the Proton donor. Mg(2+) contacts are provided by aspartate 253, glutamate 294, and aspartate 320. Lysine 345, arginine 374, serine 375, and lysine 396 together coordinate (2R)-2-phosphoglycerate. Lysine 345 (proton acceptor) is an active-site residue.

It belongs to the enolase family. Mg(2+) is required as a cofactor.

The protein resides in the cytoplasm. The protein localises to the secreted. It is found in the cell surface. It carries out the reaction (2R)-2-phosphoglycerate = phosphoenolpyruvate + H2O. The protein operates within carbohydrate degradation; glycolysis; pyruvate from D-glyceraldehyde 3-phosphate: step 4/5. In terms of biological role, catalyzes the reversible conversion of 2-phosphoglycerate (2-PG) into phosphoenolpyruvate (PEP). It is essential for the degradation of carbohydrates via glycolysis. The polypeptide is Enolase (Methanosarcina barkeri (strain Fusaro / DSM 804)).